The following is a 281-amino-acid chain: Apolipoprotein Eb (281 aa).

Residues 1–18 (MRSLVVFFALAVLTGCQA) form the signal peptide. A propeptide spanning residues 19 to 24 (RSLFQA) is cleaved from the precursor. The 3 X approximate tandem repeats stretch occupies residues 34-66 (MVDRFWQYVSELNTQTDGMVQNIKGSQLSRELD). 9 repeat units span residues 67 to 88 (TLITDTMAELSSYSENLQTQMT), 89 to 110 (PYASDAAGQLSKDLQLLAGKLQ), 111 to 132 (TDMTDAKERSTQYLQELKTMME), 133 to 154 (QNADDVKNRVGTYTRKLKKRLN), 155 to 176 (KDTEEIRNTVATYMSEMQSRAS), 177 to 199 (QNADAVKDRFQPYMSQAQDGATQ), 200 to 227 (KLGAISELMKAQAQEVSEQLEVQAGALK), 228 to 249 (EKLEETAENLRTSLEGRVDELT), and 254 to 281 (PYSQKIREQLQEVMDKIKEATAALPTQA). The 9 X 22 AA approximate tandem repeats stretch occupies residues 67–281 (TLITDTMAEL…EATAALPTQA (215 aa)).

It belongs to the apolipoprotein A1/A4/E family. In terms of assembly, homotetramer.

It is found in the secreted. Its subcellular location is the extracellular space. The protein localises to the extracellular matrix. APOE is an apolipoprotein, a protein associating with lipid particles, that mainly functions in lipoprotein-mediated lipid transport between organs via the plasma and interstitial fluids. APOE is a core component of plasma lipoproteins and is involved in their production, conversion and clearance. Apolipoproteins are amphipathic molecules that interact both with lipids of the lipoprotein particle core and the aqueous environment of the plasma. The protein is Apolipoprotein Eb (apoeb) of Danio rerio (Zebrafish).